We begin with the raw amino-acid sequence, 1157 residues long: Hephaestin (1157 aa).

Positions 1 to 23 (MKAGHLLWALLLMHSLCSLPTDG) are cleaved as a signal peptide. 6 consecutive Plastocyanin-like domains span residues 24 to 206 (AIRN…LITC), 218 to 366 (QRKD…VDSC), 370 to 559 (PPVE…LLVC), 569 to 717 (KQKG…VSQC), 730 to 902 (ASRV…LVIC), and 910 to 1066 (NGGR…SHEE). The Extracellular portion of the chain corresponds to 24 to 1109 (AIRNYYLGIQ…PVKNVEILSS (1086 aa)). Asn-49 and Asn-54 each carry an N-linked (GlcNAc...) asparagine glycan. Gly-70 and Tyr-73 together coordinate Na(+). Residues His-126 and His-128 each coordinate Cu(2+). His-126 contributes to the O2 binding site. Residues Lys-134, Asp-152, and Asp-153 each coordinate Ca(2+). N-linked (GlcNAc...) asparagine glycosylation is present at Asn-164. Cys-180 and Cys-206 are joined by a disulfide. Cu(2+) is bound by residues His-186 and His-188. His-186 contributes to the O2 binding site. An N-linked (GlcNAc...) asparagine glycan is attached at Asn-236. Ser-265 is a binding site for Na(+). A disulfide bridge links Cys-285 with Cys-366. 3 residues coordinate Cu(2+): His-304, Cys-347, and His-352. Residues Tyr-416, Gly-425, and Tyr-428 each contribute to the Na(+) site. Cys-533 and Cys-559 are oxidised to a cystine. N-linked (GlcNAc...) asparagine glycosylation is present at Asn-587. Ser-616 provides a ligand contact to Na(+). A disulfide bridge links Cys-636 with Cys-717. Residues His-655, Cys-698, His-703, and Met-708 each contribute to the Cu(2+) site. Asn-713 and Asn-757 each carry an N-linked (GlcNAc...) asparagine glycan. The Na(+) site is built by Phe-768 and Gly-777. Cys-876 and Cys-902 are joined by a disulfide. Asn-930 is a glycosylation site (N-linked (GlcNAc...) asparagine). Positions 999, 1002, 1004, 1044, 1045, 1046, 1050, and 1055 each coordinate Cu(2+). O2-binding residues include His-1002 and His-1004. His-1046 serves as a coordination point for O2. A helical transmembrane segment spans residues 1110–1130 (ALIAICVVLLLIALALGGVVW). Over 1131–1157 (YQHRQRKLRRNRRSILDDSFKLLSLKQ) the chain is Cytoplasmic. Residues Ser-1144, Ser-1149, and Ser-1154 each carry the phosphoserine modification.

Belongs to the multicopper oxidase family. Part of a complex composed of SLC40A1/ferroportin, TF/transferrin and HEPH/hephaestin that transfers iron from cells to transferrin. Cu cation serves as cofactor. In terms of tissue distribution, highly expressed in small intestine and colon.

The protein resides in the basolateral cell membrane. The catalysed reaction is 4 Fe(2+) + O2 + 4 H(+) = 4 Fe(3+) + 2 H2O. Functionally, plasma membrane ferroxidase that mediates the extracellular conversion of ferrous/Fe(2+) iron into its ferric/Fe(3+) form. Couples ferroportin which specifically exports ferrous/Fe(2+) iron from cells to transferrin that only binds and shuttles extracellular ferric/Fe(3+) iron throughout the body. By helping iron transfer from cells to blood mainly contributes to dietary iron absorption by the intestinal epithelium and more generally regulates iron levels in the body. The protein is Hephaestin of Rattus norvegicus (Rat).